The chain runs to 187 residues: LSM complex subunit LSM4 (187 aa).

The 84-residue stretch at 2–85 folds into the Sm domain; that stretch reads LPLYLLTNAK…IKFIKLQDNI (84 aa). Residues 93–187 form a disordered region; it reads INSNNNSNSN…NSSSPQKVEF (95 aa). Over residues 112–167 the composition is skewed to low complexity; the sequence is NRDSNNNRGNYNRRNNNNGNSNRRPYSQNRQYNNSNSSNINNSINSINSNNQNMNN. R119 bears the Omega-N-methylarginine mark. The span at 175 to 187 shows a compositional bias: polar residues; the sequence is HHFNSSSPQKVEF. At S181 the chain carries Phosphoserine.

It belongs to the snRNP Sm proteins family. In terms of assembly, component of the heptameric LSM1-LSM7 complex that forms a seven-membered ring structure with a donut shape. The LSm subunits are arranged in the order LSM1, LSM2, LSM3, LSM6, LSM5, LSM7 and LSM4. Except for LSM1, where a C-terminal helix crosses the ring structure to form additional interactions with LSM3 and LSM6, each subunit interacts only with its two neighboring subunits. The LSM1-LSM7 complex interacts with PAT1; within the complex PAT1 has direct interactions with LSM2 and LSM3. The LSM1-LSM7 complex interacts with XRN1. Component of the heptameric LSM2-LSM8 complex that forms a seven-membered ring structure with a donut shape; an RNA strand can pass through the hole in the center of the ring structure. The LSm subunits are arranged in the order LSM8, LSM2, LSM3, LSM6, LSM5, LSM7 and LSM4. Component of the spliceosome U4/U6-U5 tri-snRNP complex composed of the U4, U6 and U5 snRNAs and at least PRP3, PRP4, PRP6, PRP8, PRP18, PRP31, PRP38, SNU13, SNU23, SNU66, SNU114, SPP381, SMB1, SMD1, SMD2, SMD3, SMX2, SMX3, LSM2, LSM3, LSM4, LSM5, LSM6, LSM7, LSM8, BRR2 and DIB1. May be found in a complex comprising LSM2-LSM7 without LSM1 or LSM8; the complex associates with pre-P RNA and snoRNA SNR5.

It localises to the nucleus. It is found in the cytoplasm. In terms of biological role, component of LSm protein complexes, which are involved in RNA processing and may function in a chaperone-like manner. Component of the cytoplasmic LSM1-LSM7 complex which is involved in mRNA degradation by activating the decapping step. Together with PAT1, the LSM1-LSM7 complex binds to osmotic stress-activated mRNAs to attenuate the osmotic stress response, probably by limiting ribosome access to the mRNA and consequently translation. Component of the nuclear LSM2-LSM8 complex, which is involved in spliceosome assembly. The LSM2-LSM8 complex plays a role in the biogenesis of the spliceosomal U4/U6-U5 tri-snRNP complex by accelerating PRP24-mediated annealing of U4/U6 di-snRNA. The LSM2-LSM8 complex binds U6 snRNA terminating with a non-cyclic 3' phosphate group. LSM2-LSM8 is probably also involved in degradation of nuclear pre-mRNA by targeting them for decapping. LSM2-LSM8 could be involved in processing of pre-tRNAs, pre-rRNAs and U3 snoRNA, although involvement may be indirect. In a complex that probably contains LSM2-LSM7, but not LSM1 or LSM8, associates with the precursor of the RNA component of RNase P (pre-P RNA) and may be involved in maturing pre-P RNA; the complex also associates with snoRNA SNR5. The polypeptide is LSM complex subunit LSM4 (Saccharomyces cerevisiae (strain ATCC 204508 / S288c) (Baker's yeast)).